A 195-amino-acid chain; its full sequence is Guanylate kinase (195 aa).

In terms of domain architecture, Guanylate kinase-like spans 5 to 183 (GILFVISGPS…ALQKITAIII (179 aa)). 12–19 (GPSGVGKG) lines the ATP pocket.

It belongs to the guanylate kinase family.

It is found in the cytoplasm. The enzyme catalyses GMP + ATP = GDP + ADP. Its function is as follows. Essential for recycling GMP and indirectly, cGMP. This chain is Guanylate kinase, found in Syntrophomonas wolfei subsp. wolfei (strain DSM 2245B / Goettingen).